The sequence spans 583 residues: 15-cis-phytoene desaturase, chloroplastic/chromoplastic (583 aa).

Residues 1-111 (MPQIGLVSAV…FRASPRPTKP (111 aa)) constitute a chloroplast and chromoplast transit peptide. FAD-binding positions include 118–134 (GAGLGGLSTAKYLADAG), 141–142 (EA), lysine 149, 166–167 (HI), and tyrosine 172. Arginine 307 is a binding site for substrate. FAD contacts are provided by isoleucine 349 and aspartate 538. Alanine 546 lines the substrate pocket. Methionine 548 serves as a coordination point for FAD.

This sequence belongs to the carotenoid/retinoid oxidoreductase family. As to quaternary structure, homotetramer. It depends on FAD as a cofactor.

Its subcellular location is the plastid. It is found in the chloroplast. The protein resides in the chromoplast. It localises to the membrane. The enzyme catalyses 2 a plastoquinone + 15-cis-phytoene = 9,9',15-tri-cis-zeta-carotene + 2 a plastoquinol. Its pathway is carotenoid biosynthesis; lycopene biosynthesis. Functionally, converts phytoene into zeta-carotene via the intermediary of phytofluene by the symmetrical introduction of two double bonds at the C-11 and C-11' positions of phytoene with a concomitant isomerization of two neighboring double bonds at the C9 and C9' positions from trans to cis. The protein is 15-cis-phytoene desaturase, chloroplastic/chromoplastic (PDS) of Solanum lycopersicum (Tomato).